A 1269-amino-acid polypeptide reads, in one-letter code: Phospholipase D A (1269 aa).

A compositionally biased stretch (polar residues) spans 55-64; sequence YTSVGSAPTT. Residues 55–121 form a disordered region; the sequence is YTSVGSAPTT…NNNLQSPTQS (67 aa). Low complexity-rich tracts occupy residues 65–87 and 95–114; these read NNNS…SGSS and NSNK…NNNN. Positions 131–192 form a coiled coil; it reads SKALHDFEEK…ELKSLDELLH (62 aa). Over residues 222–232 the composition is skewed to polar residues; the sequence is NSVTNNTPSSA. 2 disordered regions span residues 222 to 269 and 300 to 320; these read NSVT…SSST and NSYP…DPNL. Residues 233–269 are compositionally biased toward low complexity; that stretch reads TPLTLSNNNNYTSSSLATSPTTNSSSSSSSSSSSSST. 2 PLD phosphodiesterase domains span residues 435–462 and 704–731; these read IYWS…CFGR and EQIY…NDRS. Active-site residues include His-440, Lys-442, Asp-447, His-709, Lys-711, and Asp-716. Residues 803 to 835 adopt a coiled-coil conformation; that stretch reads NNNNNSNINNNINNNNNEINNNNNNNNNNNSNE. 3 stretches are compositionally biased toward low complexity: residues 810–850, 859–906, and 934–943; these read INNN…NSNS, NLPP…GTTN, and SSPQDSPQDS. 2 disordered regions span residues 810–966 and 983–1007; these read INNN…HQSP and SNEQ…TTTD. Pro residues predominate over residues 987-1003; that stretch reads LPPPPSSTTPPPPPPPL. A coiled-coil region spans residues 1059–1096; sequence TTAQQQQQQQQQQQQQQQQQQQQQQQQQQQQQQQQQQQ. The interval 1116-1167 is disordered; that stretch reads IKKKRSSISPSTSSNKLLLSGNGSGDSIRVVTDSGSSPRGQPRSMSSLHDHA. A compositionally biased stretch (low complexity) spans 1122-1142; that stretch reads SISPSTSSNKLLLSGNGSGDS. The span at 1148–1162 shows a compositional bias: polar residues; that stretch reads DSGSSPRGQPRSMSS.

This sequence belongs to the phospholipase D family.

The catalysed reaction is a 1,2-diacyl-sn-glycero-3-phosphocholine + H2O = a 1,2-diacyl-sn-glycero-3-phosphate + choline + H(+). With respect to regulation, inhibited by butan-1-ol. Functionally, plays a role in cell growth. Hydrolyzes membrane phospholipids, such as PtdCho free headgroup and PtdOH (phosphatidic acid; signaling molecule on its own). Involved in the inhibition of actin-based motility and endocytosis. Its inhibition causes complete collapse of F-actin organization. The sequence is that of Phospholipase D A (pldA) from Dictyostelium discoideum (Social amoeba).